The chain runs to 146 residues: VHWTAEEKQLITGLWGKVNVADCGAEALARLLIVYPWTQRFFSSFGNLSSPTAILGNPMVRAHGKKVLTSFGDAVKNLDNIKNTFAQLSELHCDKLHVDPENFRLLGDILIIVLAAHFAKDFTPDCQAAWQKLVRVVAHALARKYH.

A Globin domain is found at 2 to 146 (HWTAEEKQLI…VAHALARKYH (145 aa)). Heme b is bound by residues His-63 and His-92.

It belongs to the globin family. In terms of assembly, heterotetramer of two alpha chains and two beta chains. As to expression, red blood cells.

Its function is as follows. Involved in oxygen transport from the lung to the various peripheral tissues. The chain is Hemoglobin subunit beta (HBB) from Branta canadensis (Canada goose).